The primary structure comprises 469 residues: MQQSESSSAQFDVAVIGSGPGGYEAALHAARHGMKVCLVEKASLGGVCVNWGCIPTKALLRSAEVYDLAKNPSEFGVNVSELSFDLAQAVKRSRKVSLKSSKGVEFMLKKAKVEVWRGEAVLTGSKGVKVTAEDGSERSLEAANIIVATGAQPRVIPGLEPDGKKIITSREALILKDVPESMIVVGGGAIGVEMAWFYAKAGAKVTIVELMPRLLPAEEAEVSEALKRSFEKVDITVQCGAKLGNVAISEFGVNADLLAEGKEPQKIEASCMLVAVGVTGVIDGLGLDAAGIETERGFIRTDELCRTSASGIYAIGDVRGGMLLAHKASAEAAIAVEAIAGKLPEPLSEPLIPRCVYAQPSVASVGLTEEAAIAAGYKVLVGRSQFAASGKANAYGQLEGFVKLVFNAETGKMLGGHLIGHDAVELIGELGLACRYGVTAEGLVGTVHAHPTLSETVREAAFAALQSKG.

Residues 40–48 (EKASLGGVC), Lys-57, and Ala-120 each bind FAD. The cysteines at positions 48 and 53 are disulfide-linked. NAD(+)-binding positions include 186-190 (GGGAI), Glu-209, and 275-278 (AVGV). The FAD site is built by Asp-317 and Ala-325. His-450 (proton acceptor) is an active-site residue.

The protein belongs to the class-I pyridine nucleotide-disulfide oxidoreductase family. Homodimer. The cofactor is FAD.

The protein resides in the cytoplasm. The catalysed reaction is N(6)-[(R)-dihydrolipoyl]-L-lysyl-[protein] + NAD(+) = N(6)-[(R)-lipoyl]-L-lysyl-[protein] + NADH + H(+). Its function is as follows. Lipoamide dehydrogenase is a component of the alpha-ketoacid dehydrogenase complexes. This is Dihydrolipoyl dehydrogenase (lpd) from Chlorobaculum parvum (strain DSM 263 / NCIMB 8327) (Chlorobium vibrioforme subsp. thiosulfatophilum).